The chain runs to 59 residues: UPF0434 protein RHOS4_00640 (59 aa).

It belongs to the UPF0434 family.

The chain is UPF0434 protein RHOS4_00640 from Cereibacter sphaeroides (strain ATCC 17023 / DSM 158 / JCM 6121 / CCUG 31486 / LMG 2827 / NBRC 12203 / NCIMB 8253 / ATH 2.4.1.) (Rhodobacter sphaeroides).